A 134-amino-acid chain; its full sequence is Putative thioredoxin 2 (134 aa).

The Thioredoxin domain occupies serine 3 to lysine 106. Residues cysteine 31 and cysteine 34 are joined by a disulfide bond. A disordered region spans residues alanine 115–glutamine 134. Low complexity predominate over residues alanine 117–glutamine 134.

This sequence belongs to the thioredoxin family.

Its subcellular location is the cytoplasm. Component of the thioredoxin-thioredoxin reductase system. Participates in various redox reactions through the reversible oxidation of its active center dithiol to a disulfide and catalyzes dithiol-disulfide exchange reactions. This is Putative thioredoxin 2 (trxC) from Streptomyces coelicolor (strain ATCC BAA-471 / A3(2) / M145).